Reading from the N-terminus, the 288-residue chain is MSTYFIGDIHGCYDELQTILEKVAFDPLIDTLWLTGDLVARGPSSLEVLRMIRRLGNSVRIVLGNHDLHLLAVYTGIMRNRIKDHTIPLLTAPDAEDLMNWLRYQPVLQVDNKKKILMAHAGITPQWNIDTALQCASEIETVLRSESYPLFLHSIYEDIPNYWSNELSYRARLQFSTNVFTRMRYCFPNGKLDMLCKDIPNKAPEPLRPWFNLPSTIVEKYSIIFGHWSSLLGKGTPTGIYGLDTGCCWGGKLTLLCWEDKKIIQIPSQKKRNKKCSYLCYNGKGKKN.

The protein belongs to the Ap4A hydrolase family.

The catalysed reaction is P(1),P(4)-bis(5'-adenosyl) tetraphosphate + H2O = 2 ADP + 2 H(+). Hydrolyzes diadenosine 5',5'''-P1,P4-tetraphosphate to yield ADP. This is Bis(5'-nucleosyl)-tetraphosphatase, symmetrical from Baumannia cicadellinicola subsp. Homalodisca coagulata.